Here is a 487-residue protein sequence, read N- to C-terminus: Cysteine--tRNA ligase (487 aa).

Cys-30 serves as a coordination point for Zn(2+). The 'HIGH' region motif lies at Pro-32–His-42. Positions 226, 251, and 255 each coordinate Zn(2+). The short motif at Lys-283 to Ser-287 is the 'KMSKS' region element. Lys-286 is an ATP binding site.

Belongs to the class-I aminoacyl-tRNA synthetase family. In terms of assembly, monomer. It depends on Zn(2+) as a cofactor.

Its subcellular location is the cytoplasm. The enzyme catalyses tRNA(Cys) + L-cysteine + ATP = L-cysteinyl-tRNA(Cys) + AMP + diphosphate. The polypeptide is Cysteine--tRNA ligase (cysS) (Chlorobaculum tepidum (strain ATCC 49652 / DSM 12025 / NBRC 103806 / TLS) (Chlorobium tepidum)).